A 410-amino-acid polypeptide reads, in one-letter code: Porin-like protein GalP (410 aa).

Positions 1 to 25 (MKCRTLYPLVPTFALAASLPLQALA) are cleaved as a signal peptide.

The protein belongs to the outer membrane porin (Opr) (TC 1.B.25) family.

Probable transporter, possibly involved in the gallate degradation pathway. May play a role in the uptake of low gallate concentrations that may exist in the natural habitats of P.putida. In Pseudomonas putida (strain ATCC 47054 / DSM 6125 / CFBP 8728 / NCIMB 11950 / KT2440), this protein is Porin-like protein GalP (galP).